The chain runs to 754 residues: Phosphatidylinositol 4-phosphate 5-kinase 7 (754 aa).

MORN repeat units lie at residues 16 to 38 (YSGE…DGTI), 39 to 61 (YEGD…SGAK), 62 to 84 (YEGD…DESV), 85 to 107 (YSGA…NSDL), 108 to 130 (YDGL…NGNR), 131 to 153 (YIGN…NGDL), 154 to 176 (YDGF…DGCL), and 177 to 198 (YYGT…AGTK). A PIPK domain is found at 329–750 (GEHNYYLMLN…RFVNFLHKVF (422 aa)). Positions 710-731 (YNTKKKVEHTCKSLQYDPMTIS) are activation loop.

It catalyses the reaction a 1,2-diacyl-sn-glycero-3-phospho-(1D-myo-inositol 4-phosphate) + ATP = a 1,2-diacyl-sn-glycero-3-phospho-(1D-myo-inositol-4,5-bisphosphate) + ADP + H(+). The sequence is that of Phosphatidylinositol 4-phosphate 5-kinase 7 (PIP5K7) from Arabidopsis thaliana (Mouse-ear cress).